Consider the following 239-residue polypeptide: Aspartate/glutamate leucyltransferase (239 aa).

The protein belongs to the R-transferase family. Bpt subfamily.

It localises to the cytoplasm. The catalysed reaction is N-terminal L-glutamyl-[protein] + L-leucyl-tRNA(Leu) = N-terminal L-leucyl-L-glutamyl-[protein] + tRNA(Leu) + H(+). It carries out the reaction N-terminal L-aspartyl-[protein] + L-leucyl-tRNA(Leu) = N-terminal L-leucyl-L-aspartyl-[protein] + tRNA(Leu) + H(+). In terms of biological role, functions in the N-end rule pathway of protein degradation where it conjugates Leu from its aminoacyl-tRNA to the N-termini of proteins containing an N-terminal aspartate or glutamate. The sequence is that of Aspartate/glutamate leucyltransferase from Campylobacter jejuni subsp. jejuni serotype O:6 (strain 81116 / NCTC 11828).